A 43-amino-acid chain; its full sequence is Photosystem I reaction center subunit IX (43 aa).

The helical transmembrane segment at 7-27 (YLSTAPVLATFWFGLLAGLLI) threads the bilayer.

Belongs to the PsaJ family.

It is found in the plastid. Its subcellular location is the chloroplast thylakoid membrane. In terms of biological role, may help in the organization of the PsaE and PsaF subunits. This chain is Photosystem I reaction center subunit IX, found in Gnetum parvifolium (Small-leaved jointfir).